We begin with the raw amino-acid sequence, 584 residues long: Arginine--tRNA ligase (584 aa).

A 'HIGH' region motif is present at residues 127–137 (PNTNKPLHVGH).

It belongs to the class-I aminoacyl-tRNA synthetase family. As to quaternary structure, monomer.

It is found in the cytoplasm. The enzyme catalyses tRNA(Arg) + L-arginine + ATP = L-arginyl-tRNA(Arg) + AMP + diphosphate. This Borrelia turicatae (strain 91E135) protein is Arginine--tRNA ligase.